A 339-amino-acid chain; its full sequence is Phenylalanine--tRNA ligase alpha subunit (339 aa).

Glu254 serves as a coordination point for Mg(2+).

This sequence belongs to the class-II aminoacyl-tRNA synthetase family. Phe-tRNA synthetase alpha subunit type 1 subfamily. In terms of assembly, tetramer of two alpha and two beta subunits. Mg(2+) is required as a cofactor.

It localises to the cytoplasm. The catalysed reaction is tRNA(Phe) + L-phenylalanine + ATP = L-phenylalanyl-tRNA(Phe) + AMP + diphosphate + H(+). This Desulforudis audaxviator (strain MP104C) protein is Phenylalanine--tRNA ligase alpha subunit.